Here is an 810-residue protein sequence, read N- to C-terminus: LPS-assembly protein LptD (810 aa).

The N-terminal stretch at Met1 to Ala29 is a signal peptide.

It belongs to the LptD family. In terms of assembly, component of the lipopolysaccharide transport and assembly complex. Interacts with LptE and LptA.

The protein resides in the cell outer membrane. Functionally, together with LptE, is involved in the assembly of lipopolysaccharide (LPS) at the surface of the outer membrane. The protein is LPS-assembly protein LptD of Aeromonas salmonicida (strain A449).